Here is a 30-residue protein sequence, read N- to C-terminus: uncharacterized protein (30 aa).

This is an uncharacterized protein from Bacillus subtilis (strain 168).